A 374-amino-acid polypeptide reads, in one-letter code: DNA replication and repair protein RecF (374 aa).

An ATP-binding site is contributed by 30-37; the sequence is GPNAQGKS.

Belongs to the RecF family.

The protein localises to the cytoplasm. In terms of biological role, the RecF protein is involved in DNA metabolism; it is required for DNA replication and normal SOS inducibility. RecF binds preferentially to single-stranded, linear DNA. It also seems to bind ATP. This is DNA replication and repair protein RecF from Acaryochloris marina (strain MBIC 11017).